A 380-amino-acid polypeptide reads, in one-letter code: Probable inactive dehydrogenase easA (380 aa).

FMN contacts are provided by residues 25–27, Ala-60, Gln-102, and His-171; that span reads PMT. Residues His-171 and Asn-174 each contribute to the substrate site. FMN contacts are provided by residues Lys-223, Gly-299, 324 to 325, and Arg-325; that span reads GR. Tyr-352 serves as a coordination point for substrate.

The protein belongs to the NADH:flavin oxidoreductase/NADH oxidase family.

Its function is as follows. Probable inactive dehydrogenase; part of the gene cluster that mediates the biosynthesis of fungal ergot alkaloid. DmaW catalyzes the first step of ergot alkaloid biosynthesis by condensing dimethylallyl diphosphate (DMAP) and tryptophan to form 4-dimethylallyl-L-tryptophan. The second step is catalyzed by the methyltransferase easF that methylates 4-dimethylallyl-L-tryptophan in the presence of S-adenosyl-L-methionine, resulting in the formation of 4-dimethylallyl-L-abrine. The catalase easC and the FAD-dependent oxidoreductase easE then transform 4-dimethylallyl-L-abrine to chanoclavine-I which is further oxidized by easD in the presence of NAD(+), resulting in the formation of chanoclavine-I aldehyde. Agroclavine dehydrogenase easG then mediates the conversion of chanoclavine-I aldehyde to agroclavine via a non-enzymatic adduct reaction: the substrate is an iminium intermediate that is formed spontaneously from chanoclavine-I aldehyde in the presence of glutathione. The presence of easA is not required to complete this reaction. Further conversion of agroclavine to paspalic acid is a two-step process involving oxidation of agroclavine to elymoclavine and of elymoclavine to paspalic acid, the second step being performed by the elymoclavine oxidase cloA. Paspalic acid is then further converted to D-lysergic acid. Ergopeptines are assembled from D-lysergic acid and three different amino acids by the D-lysergyl-peptide-synthetases composed each of a monomudular and a trimodular nonribosomal peptide synthetase subunit. LpsB and lpsC encode the monomodular subunits responsible for D-lysergic acid activation and incorporation into the ergopeptine backbone. LpsA1 and A2 subunits encode the trimodular nonribosomal peptide synthetase assembling the tripeptide portion of ergopeptines. LpsA1 is responsible for formation of the major ergopeptine, ergotamine, and lpsA2 for alpha-ergocryptine, the minor ergopeptine of the total alkaloid mixture elaborated by C.purpurea. D-lysergyl-tripeptides are assembled by the nonribosomal peptide synthetases and released as N-(D-lysergyl-aminoacyl)-lactams. Cyclolization of the D-lysergyl-tripeptides is performed by the Fe(2+)/2-ketoglutarate-dependent dioxygenase easH which introduces a hydroxyl group into N-(D-lysergyl-aminoacyl)-lactam at alpha-C of the aminoacyl residue followed by spontaneous condensation with the terminal lactam carbonyl group. This Claviceps purpurea (strain 20.1) (Ergot fungus) protein is Probable inactive dehydrogenase easA.